The chain runs to 299 residues: GTPase Era (299 aa).

One can recognise an Era-type G domain in the interval 5–175 (RSGFVCLVGR…IDVLAAALPP (171 aa)). Positions 13–20 (GRPNTGKS) are G1. A GTP-binding site is contributed by 13 to 20 (GRPNTGKS). Residues 39-43 (QTTRH) form a G2 region. A G3 region spans residues 60 to 63 (DTPG). Residues 60–64 (DTPGL) and 124–127 (TKID) each bind GTP. Residues 124–127 (TKID) form a G4 region. Residues 154 to 156 (VSA) form a G5 region. Residues 206–285 (VRDELPHSLA…YLDLRVKVAK (80 aa)) form the KH type-2 domain.

It belongs to the TRAFAC class TrmE-Era-EngA-EngB-Septin-like GTPase superfamily. Era GTPase family. In terms of assembly, monomer.

Its subcellular location is the cell envelope. The protein resides in the secreted. The protein localises to the cell wall. In terms of biological role, exhibits GTPase activity. Binds RNA but is probably not involved in ribosome assembly in mycobacteria. This Mycobacterium avium (strain 104) protein is GTPase Era.